The primary structure comprises 419 residues: Protein phosphatase methylesterase 1 (419 aa).

A compositionally biased stretch (basic residues) spans 1 to 12; it reads MSQLHRGMHKKP. The segment at 1-75 is disordered; sequence MSQLHRGMHK…KSAASPTVPA (75 aa). The span at 32 to 52 shows a compositional bias: acidic residues; the sequence is TETEETVECTEEEEEQDETDG. Catalysis depends on residues Ser-230, Asp-256, and His-383.

The protein belongs to the AB hydrolase superfamily.

The enzyme catalyses [phosphatase 2A protein]-C-terminal L-leucine methyl ester + H2O = [phosphatase 2A protein]-C-terminal L-leucine + methanol + H(+). Its function is as follows. Demethylates proteins that have been reversibly carboxymethylated. Demethylates the phosphatase PP2A catalytic subunit. This Yarrowia lipolytica (strain CLIB 122 / E 150) (Yeast) protein is Protein phosphatase methylesterase 1 (PPE1).